A 633-amino-acid chain; its full sequence is MGKVIGIDLGTTNSCVAVMDGKTPKVIENAEGMRTTPSIVAFSDDGERLVGQPAKRQAVTNPERTFFAVKRLIGRRYDDPMVEKDKKLVPYKIVKASNGDAWVEADANTYSPSQVSAFILQKMKETAEAHLGAKVDQAVITVPAYFNDAQRQATKDAGKIAGLEVLRIINEPTAAALAYGLDKAKAGVIAVYDLGGGTFDVSILEIGDGVFEVKSTNGDTFLGGEDFDMRLVSYLADEFQKEQGINLRNDKLALQRLKEAAEKAKIELSSTTQTEINLPFITADQTGPKHLTMKLTRAKFEALVDDLVQKTIEPCRKALKDAGLTAGEIGEVVLVGGMTRMPKVQEVVKQLFGKEPHKGVNPDEVVAIGAAIQAGVLQGDVKDVLLLDVTPLSLGIETLGGVFTRIIDRNTTIPTKKSQVFSTAEDNQNAVTIRVFQGEREMAADNKVLGQFDLMGIPPSPRGMPQIEVTFDIDANGIVNVSARDKATGKEQQIRIQASGGLSEADIDKMVKDAEINAAEDKKRREAVDAKNHADALVHSTEKALAEHGAKVEEPERRAIEDALSDLREALKGDDAEAIKTKTNTLAQASMKLGEAMYKQQAEADAAKDAAKDDVVDAEFTEVDDDKNTKKSA.

Residue Thr-198 is modified to Phosphothreonine; by autocatalysis.

It belongs to the heat shock protein 70 family.

Acts as a chaperone. The sequence is that of Chaperone protein DnaK from Rhodopseudomonas palustris (strain BisA53).